Reading from the N-terminus, the 149-residue chain is UPF0756 membrane protein MS1439 (149 aa).

4 helical membrane passes run 10–32 (IMLV…ISAL), 56–76 (VGII…KVQL), 82–102 (FLNW…WFAG), and 126–146 (VAFL…LAVI).

Belongs to the UPF0756 family.

Its subcellular location is the cell membrane. This is UPF0756 membrane protein MS1439 from Mannheimia succiniciproducens (strain KCTC 0769BP / MBEL55E).